The following is a 58-amino-acid chain: Large ribosomal subunit protein uL30 (58 aa).

The protein belongs to the universal ribosomal protein uL30 family. As to quaternary structure, part of the 50S ribosomal subunit.

In Buchnera aphidicola subsp. Baizongia pistaciae (strain Bp), this protein is Large ribosomal subunit protein uL30.